A 556-amino-acid polypeptide reads, in one-letter code: MSEAEARPSNFIRQIIDKDLADGKHTTVHTRFPPEPNGYLHIGHAKSICLNFGIAQDYQGQCNLRFDDTNPEKENLEYVESIKKDVTWLGFDWSGEVCYSSDYFDKLYEYAIELIQKGLAYVDELTPEQIREYRGTLTEPGKHSPYRDRSVEENLALFEKMRAGEFAEGQACLRAKIDMASSFIVMRDPVLYRVRFAEHHQTGDKWCIYPMYDFTHCISDALEGITHSICTLEFQDNRRLYDWVLDNITIPCHPRQYEFSRLNLEYTVMSKRKLNQLVTEKLVTGWDDPRMPTISGLRRRGFTPSAIREFCKRIGVTKQENMIEYSALESCIRDDLNENAPRAMAVLDPVKLVIENFAAGTVETLTLANHPNKPEMGDREVPFTRELWIEREDFREEANKKYKRLVLGKEVRLRGAYVIKAERIEKDEQGNITTIFCSYDPETLGKNPADGRKVKGVIHWVSAEKGVPAEFRLYERLFTVPNPGAADNFAETINPESLVKVQGYVEPSLVEAKPEFGYQFERMGYFCADNKDSSPQALVFNRTVGLRDSFVKIDEE.

Residues 34–44 (PEPNGYLHIGH) carry the 'HIGH' region motif. ATP is bound by residues 35–37 (EPN) and 41–47 (HIGHAKS). Residues aspartate 67 and tyrosine 212 each coordinate L-glutamine. ATP-binding positions include threonine 231, 261–262 (RL), and 269–271 (MSK). Residues 268-272 (VMSKR) carry the 'KMSKS' region motif.

It belongs to the class-I aminoacyl-tRNA synthetase family. Monomer.

It is found in the cytoplasm. It catalyses the reaction tRNA(Gln) + L-glutamine + ATP = L-glutaminyl-tRNA(Gln) + AMP + diphosphate. This chain is Glutamine--tRNA ligase, found in Vibrio cholerae serotype O1 (strain ATCC 39541 / Classical Ogawa 395 / O395).